Here is a 123-residue protein sequence, read N- to C-terminus: Small ribosomal subunit protein uS12cz/uS12cy (123 aa).

Belongs to the universal ribosomal protein uS12 family. In terms of assembly, part of the 30S ribosomal subunit.

Its subcellular location is the plastid. It is found in the chloroplast. Its function is as follows. With S4 and S5 plays an important role in translational accuracy. Located at the interface of the 30S and 50S subunits. This Nymphaea alba (White water-lily) protein is Small ribosomal subunit protein uS12cz/uS12cy (rps12-A).